A 294-amino-acid polypeptide reads, in one-letter code: 2-dehydropantoate 2-reductase (294 aa).

NADP(+)-binding positions include 10 to 15 (GAGALG), Arg34, Lys74, Asn98, and Ala122. The active-site Proton donor is Lys178. Substrate contacts are provided by residues Lys178, Asn182, Asn186, Asn196, and 243 to 246 (NRSS). Glu258 is a binding site for NADP(+).

This sequence belongs to the ketopantoate reductase family.

It localises to the cytoplasm. The catalysed reaction is (R)-pantoate + NAD(+) = 2-dehydropantoate + NADH + H(+). It carries out the reaction (R)-pantoate + NADP(+) = 2-dehydropantoate + NADPH + H(+). It functions in the pathway cofactor biosynthesis; coenzyme A biosynthesis. Its function is as follows. Catalyzes the NAD(P)H-dependent reduction of ketopantoate into pantoic acid. This chain is 2-dehydropantoate 2-reductase, found in Archaeoglobus fulgidus (strain ATCC 49558 / DSM 4304 / JCM 9628 / NBRC 100126 / VC-16).